A 329-amino-acid polypeptide reads, in one-letter code: MDNMLTFARQQQRRNVRWLLSLSLLVLLATLLSLCAGEQWIAPGDWLSSRGELFVWQIRLPRTLAVLLVGASLALSGAVMQALFENPLAEPGLLGVSNGAGVGLIAAVLLGQGQLPGWSLGLCAIAGALTITLILLRFARRHLSTSRLLLAGVALGIICSALMTWAIYFSTSFDLRQLMYWMMGGFGGVDWQQSWLMTALIPVLIWICCQSQPMNILALGETPARQLGLPLWLWRNLLVVATGWMVGVSVAMAGAIGFIGLVIPHILRLCGLTDHRVLLPGCALAGAIALLLADVVARLALASAELPIGVVTATLGAPIFIWLLLKSAR.

9 helical membrane passes run 18–38 (WLLSLSLLVLLATLLSLCAGE), 64–84 (LAVLLVGASLALSGAVMQALF), 91–111 (PGLLGVSNGAGVGLIAAVLLG), 115–135 (LPGWSLGLCAIAGALTITLIL), 149–169 (LLAGVALGIICSALMTWAIYF), 191–208 (WQQSWLMTALIPVLIWIC), 243–263 (GWMVGVSVAMAGAIGFIGLVI), 277–297 (VLLPGCALAGAIALLLADVVA), and 305–325 (ELPIGVVTATLGAPIFIWLLL).

The protein belongs to the binding-protein-dependent transport system permease family. FecCD subfamily. As to quaternary structure, the complex is composed of two ATP-binding proteins (BtuD), two transmembrane proteins (BtuC) and a solute-binding protein (BtuF).

It localises to the cell inner membrane. Part of the ABC transporter complex BtuCDF involved in vitamin B12 import. Involved in the translocation of the substrate across the membrane. The polypeptide is Vitamin B12 import system permease protein BtuC (Salmonella arizonae (strain ATCC BAA-731 / CDC346-86 / RSK2980)).